Consider the following 213-residue polypeptide: RNA chaperone ProQ (213 aa).

Residues 105–150 (ESQEKAKAKRAAQTPKAAPAGKAPAKKAPKKVAVPARKTERPAKAA) form a disordered region. Residues 115 to 127 (AAQTPKAAPAGKA) show a composition bias toward low complexity.

Belongs to the ProQ family.

The protein resides in the cytoplasm. Functionally, RNA chaperone with significant RNA binding, RNA strand exchange and RNA duplexing activities. This chain is RNA chaperone ProQ, found in Shewanella oneidensis (strain ATCC 700550 / JCM 31522 / CIP 106686 / LMG 19005 / NCIMB 14063 / MR-1).